We begin with the raw amino-acid sequence, 143 residues long: Large ribosomal subunit protein uL15 (143 aa).

Positions methionine 1–glycine 52 are disordered. The span at arginine 21–serine 31 shows a compositional bias: gly residues.

Belongs to the universal ribosomal protein uL15 family. In terms of assembly, part of the 50S ribosomal subunit.

Functionally, binds to the 23S rRNA. In Francisella tularensis subsp. novicida (strain U112), this protein is Large ribosomal subunit protein uL15.